Reading from the N-terminus, the 617-residue chain is Type IV inositol polyphosphate 5-phosphatase 6 (617 aa).

Disordered stretches follow at residues 30 to 62 (EFQADDPSSAGIEVEHRSSFSAEKAPSTIKNTK) and 241 to 330 (DFDP…VLYS). The span at 242–253 (FDPSFRGSSSSH) shows a compositional bias: low complexity. A compositionally biased stretch (basic and acidic residues) spans 254-290 (RPSDYSRRPSDYSRRPSDYSRRPSDYSRRPSDSRPSD). Positions 291 to 311 (YSRPSDYYSRPSDYSRPSDFS) are enriched in low complexity. Catalytic regions lie at residues 458–473 (DRVIWLGDLNYRIALS) and 538–553 (KRRTPAWCDRILWFGE).

This sequence belongs to the inositol polyphosphate 5-phosphatase family. Broadly expressed in emerging organs. Mostly localized in procambium of growing organs. Restricted to vascular differentiating cells of young organs.

It catalyses the reaction a 1,2-diacyl-sn-glycero-3-phospho-(1D-myo-inositol-4,5-bisphosphate) + H2O = a 1,2-diacyl-sn-glycero-3-phospho-(1D-myo-inositol 4-phosphate) + phosphate. It carries out the reaction a 1,2-diacyl-sn-glycero-3-phospho-(1D-myo-inositol-3,4,5-trisphosphate) + H2O = a 1,2-diacyl-sn-glycero-3-phospho-(1D-myo-inositol-3,4-bisphosphate) + phosphate. Its function is as follows. Has phosphatase activity toward PtdIns(4,5)P2 and PtdIns(3,4,5)P3. Required for the patterning of procambium and during the differentiation of vascular tissues. Acts before the acquisition of preprocambial identity. Seems to be also involved in the abscisic acid (ABA) signaling pathway. Acts redundantly with CVL1 for maintaining vascular continuity. Regulates phosphoinositide-dependent VAN3 localization. This is Type IV inositol polyphosphate 5-phosphatase 6 from Arabidopsis thaliana (Mouse-ear cress).